A 548-amino-acid polypeptide reads, in one-letter code: Synaptic vesicle 2-related protein (548 aa).

Over 1–87 (MEDDLFQLRH…GFGKFQWKLS (87 aa)) the chain is Cytoplasmic. The helical transmembrane segment at 88–108 (MLTGLAWMADAMEMMILSILA) threads the bilayer. The Vesicular portion of the chain corresponds to 109-119 (PQLHCEWRLPS). The helical transmembrane segment at 120 to 140 (WQVALLTSVVFIGMMASSSLW) threads the bilayer. The Cytoplasmic segment spans residues 141-156 (GNVSDQYGRRTGLKIS). Residues 157-177 (VIWTLYYGILSAFAPVYSWIL) traverse the membrane as a helical segment. Residues 178 to 180 (VLR) are Vesicular-facing. The chain crosses the membrane as a helical span at residues 181 to 201 (GLVGFGIGGVPQSVTLYAEFL). The Cytoplasmic segment spans residues 202–209 (PMKSRAKC). The helical transmembrane segment at 210 to 230 (ILLIEIFWALGTVFEVLLAIF) threads the bilayer. Topologically, residues 231 to 238 (VMPTLGWR) are vesicular. The chain crosses the membrane as a helical span at residues 239–259 (WLLILSALPLMLFAILCFWLP). Over 260–316 (ESARYEVLSGNQEKALATLKRIATENGAPMPLGKLIVSRQEDRGKIRDLFSPQFRCT) the chain is Cytoplasmic. A helical membrane pass occupies residues 317-337 (TLLLWFIWFSNAFSYYGLVLL). The Vesicular portion of the chain corresponds to 338-373 (TTELFQAGDVCSISNQRKAVKPKCSLACEYLTVEDY). Residues 374 to 394 (TDLLWTTLSEFPGLLVTLWII) traverse the membrane as a helical segment. Residues 395–401 (DRVGRKK) lie on the Cytoplasmic side of the membrane. Residues 402-422 (TMAICFIIFSFSALLLFLCVG) traverse the membrane as a helical segment. Over 423–424 (RN) the chain is Vesicular. Residues 425–445 (VLTVFLFIARAFISGGFQAAY) form a helical membrane-spanning segment. Over 446 to 457 (VYTPEVYPTATR) the chain is Cytoplasmic. The helical transmembrane segment at 458-478 (ALGLGTCSGMARVGALITPFI) threads the bilayer. Residues 479–486 (AQVMLESS) lie on the Vesicular side of the membrane. Residues 487–507 (IYLTVLVYSGCCVLAAVASCF) traverse the membrane as a helical segment. At 508-548 (LPIETKGRGLQESSHREWGQEMVGRGTHNVGATPSHSGSQE) the chain is on the cytoplasmic side. Residues 519 to 548 (ESSHREWGQEMVGRGTHNVGATPSHSGSQE) form a disordered region. Residues 537–548 (VGATPSHSGSQE) show a composition bias toward polar residues.

Belongs to the major facilitator superfamily. In terms of tissue distribution, detected in embryonic trigeminal ganglion and spinal cord.

Its subcellular location is the cytoplasmic vesicle. It localises to the secretory vesicle. The protein resides in the synaptic vesicle membrane. This chain is Synaptic vesicle 2-related protein (svop), found in Xenopus laevis (African clawed frog).